Here is a 96-residue protein sequence, read N- to C-terminus: Antigen H4 (96 aa).

The segment at 1–20 (EFQEEIKEGVEEHKHEDDPE) is disordered. The N-linked (GlcNAc...) asparagine glycan is linked to N34.

The sequence is that of Antigen H4 (H4) from Toxoplasma gondii.